The sequence spans 490 residues: Bifunctional IPC transferase and DIPP synthase (490 aa).

The tract at residues 72–290 (LMKAVILAAG…RANRALVSAA (219 aa)) is mobA-like NTP transferase. Residues 78–80 (LAA), lysine 91, aspartate 144, and glutamate 180 each bind CTP. Glutamate 180 contacts Mg(2+). The tract at residues 291 to 490 (VKGSGDGFIS…VTLLAVLVSK (200 aa)) is CDP-alcohol phosphatidyltransferases. The next 4 helical transmembrane spans lie at 329–349 (FLVGAFSALASFFSIPLAGLL), 389–409 (FLAIIALLYPKTATVAMFAIF), 447–467 (IFLIMIFCLLSAISLQWIFWM), and 468–488 (FLFVAAISLTRVVVTLLAVLV).

It in the N-terminal section; belongs to the MobA family. In the C-terminal section; belongs to the CDP-alcohol phosphatidyltransferase class-I family. As to quaternary structure, forms a mixture of monomers and dimers in solution, with prevalence of the monomeric form. It depends on Mg(2+) as a cofactor.

The protein localises to the membrane. It catalyses the reaction 1D-myo-inositol 3-phosphate + CTP + H(+) = CDP-1L-myo-inositol + diphosphate. It carries out the reaction CDP-1L-myo-inositol + 1D-myo-inositol 3-phosphate = bis(1L-myo-inositol) 3,1'-phosphate 1-phosphate + CMP + H(+). Functionally, involved in biosynthesis of di-myo-inositol phosphate (DIP), a widespread organic solute in microorganisms adapted to hot environments. Catalyzes the condensation of CTP and L-myo-inositol-1-phosphate into CDP-L-myo-inositol, as well as the biosynthesis of di-myo-inositol-1,3'-phosphate-1'-phosphate (DIPP) from CDP-L-myo-inositol and L-myo-inositol-1-phosphate. The cytidylyltransferase is absolutely specific for CTP and L-myo-inositol-1-P. The DIPP synthase uses only L-myoinositol-1-phosphate as an alcohol acceptor, but CDP-glycerol, as well as CDP-L-myo-inositol and CDP-D-myoinositol, are recognized as alcohol donors. The polypeptide is Bifunctional IPC transferase and DIPP synthase (Archaeoglobus fulgidus (strain ATCC 49558 / DSM 4304 / JCM 9628 / NBRC 100126 / VC-16)).